The chain runs to 980 residues: Peroxisomal ATPase PEX6 (980 aa).

The residue at position 119 (Arg119) is an Omega-N-methylarginine. Residues 470 to 477 (GPPGSGKT) and 744 to 751 (GPPGTGKT) contribute to the ATP site.

It belongs to the AAA ATPase family. Interacts with PEX1; forming the PEX1-PEX6 AAA ATPase complex, which is composed of a heterohexamer formed by a trimer of PEX1-PEX6 dimers. Interacts with PEX26; interaction is direct and promotes recruitment to peroxisomal membranes. Interacts with ZFAND6.

Its subcellular location is the cytoplasm. The protein localises to the cytosol. The protein resides in the peroxisome membrane. It localises to the cell projection. It is found in the cilium. Its subcellular location is the photoreceptor outer segment. The enzyme catalyses ATP + H2O = ADP + phosphate + H(+). Component of the PEX1-PEX6 AAA ATPase complex, a protein dislocase complex that mediates the ATP-dependent extraction of the PEX5 receptor from peroxisomal membranes, an essential step for PEX5 recycling. Specifically recognizes PEX5 monoubiquitinated at 'Cys-11', and pulls it out of the peroxisome lumen through the PEX2-PEX10-PEX12 retrotranslocation channel. Extraction by the PEX1-PEX6 AAA ATPase complex is accompanied by unfolding of the TPR repeats and release of bound cargo from PEX5. This chain is Peroxisomal ATPase PEX6, found in Cricetulus griseus (Chinese hamster).